Reading from the N-terminus, the 443-residue chain is Protoheme IX farnesyltransferase, mitochondrial (443 aa).

A run of 7 helical transmembrane segments spans residues 174-194 (AAGF…LTSV), 235-255 (LAVS…TLGV), 257-277 (PLTG…YTPL), 280-300 (ISIA…VMGW), 309-329 (AGAF…FNAL), 364-384 (LLVL…FPIM), and 411-431 (LFFC…TCKR).

This sequence belongs to the UbiA prenyltransferase family.

Its subcellular location is the mitochondrion membrane. The enzyme catalyses heme b + (2E,6E)-farnesyl diphosphate + H2O = Fe(II)-heme o + diphosphate. In terms of biological role, converts protoheme IX and farnesyl diphosphate to heme O. This chain is Protoheme IX farnesyltransferase, mitochondrial (COX10), found in Homo sapiens (Human).